The primary structure comprises 167 residues: MTQEEEYILIGKVLGVWGINGGLKIEVLTDFPERFDAGNELLIGRAPYTISQTSWQKAQVIVHLSEITGIDAAEELSGAQVEIPAAALKKLPKGVYYDFQLIGLEVTDLSGNRIGQIKEILHMPSNDIYVSSYGAKEALIPAVKDVVKEINLQKGQVIIDPIPGLLD.

In terms of domain architecture, PRC barrel spans 93–165 (KGVYYDFQLI…QVIIDPIPGL (73 aa)).

It belongs to the RimM family. Binds ribosomal protein uS19.

Its subcellular location is the cytoplasm. Functionally, an accessory protein needed during the final step in the assembly of 30S ribosomal subunit, possibly for assembly of the head region. Essential for efficient processing of 16S rRNA. May be needed both before and after RbfA during the maturation of 16S rRNA. It has affinity for free ribosomal 30S subunits but not for 70S ribosomes. This chain is Ribosome maturation factor RimM, found in Dehalococcoides mccartyi (strain ATCC BAA-2266 / KCTC 15142 / 195) (Dehalococcoides ethenogenes (strain 195)).